Reading from the N-terminus, the 266-residue chain is Probable sulfate transport system permease protein cysT (266 aa).

The next 7 membrane-spanning stretches (helical) occupy residues 12 to 32, 59 to 79, 91 to 111, 129 to 149, 181 to 201, 206 to 226, and 236 to 256; these read ILLF…FLLI, MAFY…WVLT, AAVD…LATV, IVFT…PFVI, VILP…FSRA, GSIV…SVLI, and LGAS…LLLI. Residues 53 to 257 form the ABC transmembrane type-1 domain; it reads YLLTVQMAFY…IALFTLLLIN (205 aa).

The protein belongs to the binding-protein-dependent transport system permease family. CysTW subfamily.

Its subcellular location is the plastid. The protein resides in the chloroplast membrane. In terms of biological role, part of the ABC transporter complex cysAWTP (TC 3.A.1.6.1) involved in sulfate/thiosulfate import. Probably responsible for the translocation of the substrate across the membrane. In Chlorella vulgaris (Green alga), this protein is Probable sulfate transport system permease protein cysT (cysT).